A 112-amino-acid polypeptide reads, in one-letter code: uncharacterized protein (112 aa).

2 disordered regions span residues 1-53 and 80-112; these read MSKL…QRLK and MINQ…MLEL. Polar residues predominate over residues 8 to 22; that stretch reads SALQKLIESQKNPNA. Positions 86–96 are enriched in basic residues; the sequence is ETKKRKRKQKK. The span at 101-112 shows a compositional bias: acidic residues; it reads DYGVFEEDMLEL.

It is found in the nucleus. It localises to the nucleolus. This is an uncharacterized protein from Schizosaccharomyces pombe (strain 972 / ATCC 24843) (Fission yeast).